A 189-amino-acid chain; its full sequence is UPF0494 membrane protein C977.06 (189 aa).

3 consecutive transmembrane segments (helical) span residues 78–98 (WPLL…NFEV), 120–140 (IWGP…GLIY), and 148–168 (AIPL…VAMV).

The protein belongs to the UPF0494 family.

The protein localises to the membrane. This chain is UPF0494 membrane protein C977.06, found in Schizosaccharomyces pombe (strain 972 / ATCC 24843) (Fission yeast).